A 167-amino-acid chain; its full sequence is Ribosome maturation factor RimM (167 aa).

The 74-residue stretch at Glu92–Met165 folds into the PRC barrel domain.

The protein belongs to the RimM family. In terms of assembly, binds ribosomal protein uS19.

It is found in the cytoplasm. Its function is as follows. An accessory protein needed during the final step in the assembly of 30S ribosomal subunit, possibly for assembly of the head region. Essential for efficient processing of 16S rRNA. May be needed both before and after RbfA during the maturation of 16S rRNA. It has affinity for free ribosomal 30S subunits but not for 70S ribosomes. The chain is Ribosome maturation factor RimM from Alkaliphilus oremlandii (strain OhILAs) (Clostridium oremlandii (strain OhILAs)).